The sequence spans 238 residues: Ion-translocating oxidoreductase complex subunit E (238 aa).

The next 6 helical transmembrane spans lie at 24-44 (ALWQYNVALVQMLALCPTLAV), 52-72 (LGMGLATTLVLVMTNALISSM), 84-104 (VMIGVIAGVVTLTDMAMNAWM), 106-126 (ELYKVLGLFIALIVTNCAVLG), 141-161 (ILDGAGMGAGFTAVLVVIGGI), and 195-215 (GILLAILPPGAFIVLGFLLAA).

The protein belongs to the NqrDE/RnfAE family. As to quaternary structure, the complex is composed of six subunits: RnfA, RnfB, RnfC, RnfD, RnfE and RnfG.

It is found in the cell inner membrane. In terms of biological role, part of a membrane-bound complex that couples electron transfer with translocation of ions across the membrane. The sequence is that of Ion-translocating oxidoreductase complex subunit E from Azotobacter vinelandii (strain DJ / ATCC BAA-1303).